A 108-amino-acid chain; its full sequence is Transmembrane protein 265 (108 aa).

The next 2 helical transmembrane spans lie at 34–54 and 78–98; these read AATS…VFAI and LILA…LLLW.

This sequence belongs to the CD225/Dispanin family.

It is found in the membrane. This chain is Transmembrane protein 265, found in Homo sapiens (Human).